We begin with the raw amino-acid sequence, 255 residues long: tRNA pseudouridine synthase B (255 aa).

The active-site Nucleophile is the aspartate 52. Residues tyrosine 80, tyrosine 183, and leucine 204 each coordinate substrate.

This sequence belongs to the pseudouridine synthase TruB family. Type 1 subfamily.

It catalyses the reaction uridine(55) in tRNA = pseudouridine(55) in tRNA. Responsible for synthesis of pseudouridine from uracil-55 in the psi GC loop of transfer RNAs. The sequence is that of tRNA pseudouridine synthase B from Blochmanniella floridana.